We begin with the raw amino-acid sequence, 360 residues long: Mitogen-activated protein kinase 14 (360 aa).

Ser-2 is modified (N-acetylserine). Residue Ser-2 is modified to Phosphoserine. Thr-16 bears the Phosphothreonine mark. Residues 24-308 enclose the Protein kinase domain; sequence YQNLSPVGSG…AAQALAHAYF (285 aa). Residues 30–38 and Lys-53 each bind ATP; that span reads VGSGAYGSV. Residues Lys-53 and Lys-152 each carry the N6-acetyllysine modification. The active-site Proton acceptor is Asp-168. Thr-180 is modified (phosphothreonine; by MAP2K3, MAP2K4, MAP2K6 and autocatalysis). The short motif at 180-182 is the TXY element; sequence TGY. Tyr-182 carries the post-translational modification Phosphotyrosine; by MAP2K3, MAP2K4, MAP2K6 and autocatalysis. Residue Thr-263 is modified to Phosphothreonine. Tyr-323 is subject to Phosphotyrosine; by ZAP70.

This sequence belongs to the protein kinase superfamily. CMGC Ser/Thr protein kinase family. MAP kinase subfamily. In terms of assembly, component of a signaling complex containing at least AKAP13, PKN1, MAPK14, ZAK and MAP2K3. Within this complex, AKAP13 interacts directly with PKN1, which in turn recruits MAPK14, MAP2K3 and ZAK. Binds to a kinase interaction motif within the protein tyrosine phosphatase, PTPRR. This interaction retains MAPK14 in the cytoplasm and prevents nuclear accumulation. Interacts with SPAG9 and GADD45A. Interacts with CDC25B, CDC25C, DUSP1, DUSP10, DUSP16, NP60, SUPT20H and TAB1. Interacts with casein kinase II subunits CSNK2A1 and CSNK2B. Interacts with PPM1D. Interacts with CDK5RAP3; recruits PPM1D to MAPK14 and may regulate its dephosphorylation. Interacts with DUSP2; this interaction does not lead to catalytic activation of DUSP2 and dephosphrylation of MAPK14. Requires Mg(2+) as cofactor. In terms of processing, dually phosphorylated on Thr-180 and Tyr-182 by the MAP2Ks MAP2K3/MKK3, MAP2K4/MKK4 and MAP2K6/MKK6 in response to inflammatory citokines, environmental stress or growth factors, which activates the enzyme. Dual phosphorylation can also be mediated by TAB1-mediated autophosphorylation. TCR engagement in T-cells also leads to Tyr-323 phosphorylation by ZAP70. Dephosphorylated and inactivated by DUPS1, DUSP10 and DUSP16. PPM1D also mediates dephosphorylation and inactivation of MAPK14. Post-translationally, acetylated at Lys-53 and Lys-152 by KAT2B and EP300. Acetylation at Lys-53 increases the affinity for ATP and enhances kinase activity. Lys-53 and Lys-152 are deacetylated by HDAC3. Ubiquitinated. Ubiquitination leads to degradation by the proteasome pathway. Brain, heart, placenta, pancreas and skeletal muscle. Expressed to a lesser extent in lung, liver and kidney.

Its subcellular location is the cytoplasm. It localises to the nucleus. It catalyses the reaction L-seryl-[protein] + ATP = O-phospho-L-seryl-[protein] + ADP + H(+). The catalysed reaction is L-threonyl-[protein] + ATP = O-phospho-L-threonyl-[protein] + ADP + H(+). With respect to regulation, activated by cell stresses such as DNA damage, heat shock, osmotic shock, anisomycin and sodium arsenite, as well as pro-inflammatory stimuli such as bacterial lipopolysaccharide (LPS) and interleukin-1. Activation occurs through dual phosphorylation of Thr-180 and Tyr-182 by either of two dual specificity kinases, MAP2K3/MKK3 or MAP2K6/MKK6, and potentially also MAP2K4/MKK4, as well as by TAB1-mediated autophosphorylation. MAPK14 phosphorylated on both Thr-180 and Tyr-182 is 10-20-fold more active than MAPK14 phosphorylated only on Thr-180, whereas MAPK14 phosphorylated on Tyr-182 alone is inactive. whereas Thr-180 is necessary for catalysis, Tyr-182 may be required for auto-activation and substrate recognition. Phosphorylated at Tyr-323 by ZAP70 in an alternative activation pathway in response to TCR signaling in T-cells. This alternative pathway is inhibited by GADD45A. Inhibited by dual specificity phosphatases, such as DUSP1, DUSP10, and DUSP16. Specifically inhibited by the binding of pyridinyl-imidazole compounds, which are cytokine-suppressive anti-inflammatory drugs (CSAID). Isoform Mxi2 is 100-fold less sensitive to these agents than the other isoforms and is not inhibited by DUSP1. Isoform Exip is not activated by MAP2K6. SB203580 is an inhibitor of MAPK14. In terms of biological role, serine/threonine kinase which acts as an essential component of the MAP kinase signal transduction pathway. MAPK14 is one of the four p38 MAPKs which play an important role in the cascades of cellular responses evoked by extracellular stimuli such as pro-inflammatory cytokines or physical stress leading to direct activation of transcription factors. Accordingly, p38 MAPKs phosphorylate a broad range of proteins and it has been estimated that they may have approximately 200 to 300 substrates each. Some of the targets are downstream kinases which are activated through phosphorylation and further phosphorylate additional targets. RPS6KA5/MSK1 and RPS6KA4/MSK2 can directly phosphorylate and activate transcription factors such as CREB1, ATF1, the NF-kappa-B isoform RELA/NFKB3, STAT1 and STAT3, but can also phosphorylate histone H3 and the nucleosomal protein HMGN1. RPS6KA5/MSK1 and RPS6KA4/MSK2 play important roles in the rapid induction of immediate-early genes in response to stress or mitogenic stimuli, either by inducing chromatin remodeling or by recruiting the transcription machinery. On the other hand, two other kinase targets, MAPKAPK2/MK2 and MAPKAPK3/MK3, participate in the control of gene expression mostly at the post-transcriptional level, by phosphorylating ZFP36 (tristetraprolin) and ELAVL1, and by regulating EEF2K, which is important for the elongation of mRNA during translation. MKNK1/MNK1 and MKNK2/MNK2, two other kinases activated by p38 MAPKs, regulate protein synthesis by phosphorylating the initiation factor EIF4E2. MAPK14 also interacts with casein kinase II, leading to its activation through autophosphorylation and further phosphorylation of TP53/p53. In the cytoplasm, the p38 MAPK pathway is an important regulator of protein turnover. For example, CFLAR is an inhibitor of TNF-induced apoptosis whose proteasome-mediated degradation is regulated by p38 MAPK phosphorylation. In a similar way, MAPK14 phosphorylates the ubiquitin ligase SIAH2, regulating its activity towards EGLN3. MAPK14 may also inhibit the lysosomal degradation pathway of autophagy by interfering with the intracellular trafficking of the transmembrane protein ATG9. Another function of MAPK14 is to regulate the endocytosis of membrane receptors by different mechanisms that impinge on the small GTPase RAB5A. In addition, clathrin-mediated EGFR internalization induced by inflammatory cytokines and UV irradiation depends on MAPK14-mediated phosphorylation of EGFR itself as well as of RAB5A effectors. Ectodomain shedding of transmembrane proteins is regulated by p38 MAPKs as well. In response to inflammatory stimuli, p38 MAPKs phosphorylate the membrane-associated metalloprotease ADAM17. Such phosphorylation is required for ADAM17-mediated ectodomain shedding of TGF-alpha family ligands, which results in the activation of EGFR signaling and cell proliferation. Another p38 MAPK substrate is FGFR1. FGFR1 can be translocated from the extracellular space into the cytosol and nucleus of target cells, and regulates processes such as rRNA synthesis and cell growth. FGFR1 translocation requires p38 MAPK activation. In the nucleus, many transcription factors are phosphorylated and activated by p38 MAPKs in response to different stimuli. Classical examples include ATF1, ATF2, ATF6, ELK1, PTPRH, DDIT3, TP53/p53 and MEF2C and MEF2A. The p38 MAPKs are emerging as important modulators of gene expression by regulating chromatin modifiers and remodelers. The promoters of several genes involved in the inflammatory response, such as IL6, IL8 and IL12B, display a p38 MAPK-dependent enrichment of histone H3 phosphorylation on 'Ser-10' (H3S10ph) in LPS-stimulated myeloid cells. This phosphorylation enhances the accessibility of the cryptic NF-kappa-B-binding sites marking promoters for increased NF-kappa-B recruitment. Phosphorylates CDC25B and CDC25C which is required for binding to 14-3-3 proteins and leads to initiation of a G2 delay after ultraviolet radiation. Phosphorylates TIAR following DNA damage, releasing TIAR from GADD45A mRNA and preventing mRNA degradation. The p38 MAPKs may also have kinase-independent roles, which are thought to be due to the binding to targets in the absence of phosphorylation. Protein O-Glc-N-acylation catalyzed by the OGT is regulated by MAPK14, and, although OGT does not seem to be phosphorylated by MAPK14, their interaction increases upon MAPK14 activation induced by glucose deprivation. This interaction may regulate OGT activity by recruiting it to specific targets such as neurofilament H, stimulating its O-Glc-N-acylation. Required in mid-fetal development for the growth of embryo-derived blood vessels in the labyrinth layer of the placenta. Also plays an essential role in developmental and stress-induced erythropoiesis, through regulation of EPO gene expression. Isoform MXI2 activation is stimulated by mitogens and oxidative stress and only poorly phosphorylates ELK1 and ATF2. Isoform EXIP may play a role in the early onset of apoptosis. Phosphorylates S100A9 at 'Thr-113'. Phosphorylates NLRP1 downstream of MAP3K20/ZAK in response to UV-B irradiation and ribosome collisions, promoting activation of the NLRP1 inflammasome and pyroptosis. (Microbial infection) Activated by phosphorylation by M.tuberculosis EsxA in T-cells leading to inhibition of IFN-gamma production; phosphorylation is apparent within 15 minutes and is inhibited by kinase-specific inhibitors SB203580 and siRNA. The sequence is that of Mitogen-activated protein kinase 14 from Homo sapiens (Human).